Here is a 78-residue protein sequence, read N- to C-terminus: Hainantoxin-XX (78 aa).

The signal sequence occupies residues 1–23 (MKSATLLALSFLLIALYFLICEA). Positions 24 to 47 (EHSRYEEHEILEENMGDVVNLEQR) are excised as a propeptide. Intrachain disulfides connect Cys49–Cys62, Cys56–Cys66, and Cys61–Cys77.

This sequence belongs to the hainantoxin family. 20 subfamily. As to expression, expressed by the venom gland.

The protein resides in the secreted. In terms of biological role, putative ion channel inhibitor. This is Hainantoxin-XX from Cyriopagopus hainanus (Chinese bird spider).